The primary structure comprises 129 residues: Glycine cleavage system H protein (129 aa).

Residues 24–106 enclose the Lipoyl-binding domain; that stretch reads IAVIGITAYA…YGDGWLIKVR (83 aa). N6-lipoyllysine is present on lysine 65.

This sequence belongs to the GcvH family. The glycine cleavage system is composed of four proteins: P, T, L and H. The cofactor is (R)-lipoate.

Its function is as follows. The glycine cleavage system catalyzes the degradation of glycine. The H protein shuttles the methylamine group of glycine from the P protein to the T protein. The sequence is that of Glycine cleavage system H protein from Synechococcus sp. (strain JA-3-3Ab) (Cyanobacteria bacterium Yellowstone A-Prime).